A 543-amino-acid chain; its full sequence is Chaperonin GroEL (543 aa).

ATP-binding positions include 29-32, 86-90, Gly-413, and Asp-504; these read TVGP and DGTTT.

It belongs to the chaperonin (HSP60) family. Forms a cylinder of 14 subunits composed of two heptameric rings stacked back-to-back. Interacts with the co-chaperonin GroES.

The protein resides in the cytoplasm. It carries out the reaction ATP + H2O + a folded polypeptide = ADP + phosphate + an unfolded polypeptide.. Its function is as follows. Together with its co-chaperonin GroES, plays an essential role in assisting protein folding. The GroEL-GroES system forms a nano-cage that allows encapsulation of the non-native substrate proteins and provides a physical environment optimized to promote and accelerate protein folding. This Mycoplasma pneumoniae (strain ATCC 29342 / M129 / Subtype 1) (Mycoplasmoides pneumoniae) protein is Chaperonin GroEL.